Reading from the N-terminus, the 511-residue chain is MASDSSFPGASSNVAEYSVSEISGALKRTVEDTFGHVRVRGEISGYRGPHSSGHAYFALKDDRARLEAVIWRGSMSRLRFRPEEGMEVIATGKLTTYPGSSKYQIVIEQMEPAGAGALMALLEERKQRLAAEGLFDPALKQLLPFMPRVIGVVTSPTGAVIRDIIHRISDRYPLRVIVWPVRVQGDTCGPEVATAVNGFNTLPDDGPILRPDVLIVARGGGSLEDLWGFNDEIVVRAVAASHIPVISAVGHETDWTLIDLAADMRAPTPTGAAEMAVPVKADLQASLASQSARLSSAMSRFFDQKRQAHRAAARAMPSADQLLALPRRRFDEAASRLTRALFVNTQKKRVHFDGHARQLSPRLLQRRLVELERGVTMLGQRLPRALEAFLRERRTAFTHRANRLSPEPILRRTRLTGSTLEQLDRRRDQAVRLLIERVKRRSQELDRLMRTLSYESVLERGFAVVFDAQGKPVKQAAAVSPGDALSVRFRDGDVGVVARAGLTIPDPTKGQ.

It belongs to the XseA family. Heterooligomer composed of large and small subunits.

It localises to the cytoplasm. It carries out the reaction Exonucleolytic cleavage in either 5'- to 3'- or 3'- to 5'-direction to yield nucleoside 5'-phosphates.. Bidirectionally degrades single-stranded DNA into large acid-insoluble oligonucleotides, which are then degraded further into small acid-soluble oligonucleotides. The sequence is that of Exodeoxyribonuclease 7 large subunit from Brucella suis (strain ATCC 23445 / NCTC 10510).